The primary structure comprises 101 residues: Small ribosomal subunit protein bS18c (101 aa).

It belongs to the bacterial ribosomal protein bS18 family. As to quaternary structure, part of the 30S ribosomal subunit.

The protein localises to the plastid. It is found in the chloroplast. In Coffea arabica (Arabian coffee), this protein is Small ribosomal subunit protein bS18c.